Here is a 262-residue protein sequence, read N- to C-terminus: Hydroxyethylthiazole kinase (262 aa).

M50 contacts substrate. 2 residues coordinate ATP: R125 and T171. G198 contacts substrate.

The protein belongs to the Thz kinase family. It depends on Mg(2+) as a cofactor.

The catalysed reaction is 5-(2-hydroxyethyl)-4-methylthiazole + ATP = 4-methyl-5-(2-phosphooxyethyl)-thiazole + ADP + H(+). It functions in the pathway cofactor biosynthesis; thiamine diphosphate biosynthesis; 4-methyl-5-(2-phosphoethyl)-thiazole from 5-(2-hydroxyethyl)-4-methylthiazole: step 1/1. Functionally, catalyzes the phosphorylation of the hydroxyl group of 4-methyl-5-beta-hydroxyethylthiazole (THZ). This Shigella boydii serotype 4 (strain Sb227) protein is Hydroxyethylthiazole kinase.